The chain runs to 345 residues: MVRNWCSLIRPRRIEIDESTHTRFYGEFVCQPLERGFGITLGNALRRVLLSSIQGAAIVSVKIDNVLHEFSTVPGVKEDITDIILNLKGVRLKLLSDGPRVIRIDTKKEGVITAADIITDGTVEVLNEDHYIASLSGDMPFRMEMVVNSGRGYVQAKKEKDVDQPEGTINIDALYSPIKKVNYTVTHARVGQIADYDKLSLEVWTDGNVLPEDAVAFAAKILKKQLQVFVGLHTVIGTEEVEEEEEGEAVSEKENLNDILLRHVEDLELSVRSANCLKNAGINLIGELVQKSEAEMLKTKNFGRKSLSEIKEILAEYGLTFGMKLEFTPWNKDVREEMGEIQEEG.

The alpha N-terminal domain (alpha-NTD) stretch occupies residues 1 to 233 (MVRNWCSLIR…KQLQVFVGLH (233 aa)). Residues 256-345 (LNDILLRHVE…EEMGEIQEEG (90 aa)) are alpha C-terminal domain (alpha-CTD).

It belongs to the RNA polymerase alpha chain family. As to quaternary structure, homodimer. The RNAP catalytic core consists of 2 alpha, 1 beta, 1 beta' and 1 omega subunit. When a sigma factor is associated with the core the holoenzyme is formed, which can initiate transcription.

It carries out the reaction RNA(n) + a ribonucleoside 5'-triphosphate = RNA(n+1) + diphosphate. In terms of biological role, DNA-dependent RNA polymerase catalyzes the transcription of DNA into RNA using the four ribonucleoside triphosphates as substrates. This Syntrophus aciditrophicus (strain SB) protein is DNA-directed RNA polymerase subunit alpha.